The sequence spans 876 residues: Valine--tRNA ligase (876 aa).

The 'HIGH' region motif lies at 44–54; it reads PNVTGKLHLGH. Positions 520–524 match the 'KMSKS' region motif; it reads KMSKS. Lysine 523 contributes to the ATP binding site. Residues 806–876 adopt a coiled-coil conformation; the sequence is EGLIDMDKEI…VKLRINQLKA (71 aa).

The protein belongs to the class-I aminoacyl-tRNA synthetase family. ValS type 1 subfamily. In terms of assembly, monomer.

The protein resides in the cytoplasm. The enzyme catalyses tRNA(Val) + L-valine + ATP = L-valyl-tRNA(Val) + AMP + diphosphate. Functionally, catalyzes the attachment of valine to tRNA(Val). As ValRS can inadvertently accommodate and process structurally similar amino acids such as threonine, to avoid such errors, it has a 'posttransfer' editing activity that hydrolyzes mischarged Thr-tRNA(Val) in a tRNA-dependent manner. The chain is Valine--tRNA ligase from Staphylococcus saprophyticus subsp. saprophyticus (strain ATCC 15305 / DSM 20229 / NCIMB 8711 / NCTC 7292 / S-41).